We begin with the raw amino-acid sequence, 139 residues long: uncharacterized protein (139 aa).

The protein to E.coli YecT.

This is an uncharacterized protein from Rhizobium meliloti (strain 1021) (Ensifer meliloti).